Here is a 1081-residue protein sequence, read N- to C-terminus: WD repeat-containing protein 64 (1081 aa).

14 WD repeats span residues 102–152 (DPIA…ATQK), 153–198 (GLIT…GSSQ), 199–265 (ENYF…VLDS), 266–314 (KNFK…LEDN), 315–356 (LPVR…NIST), 357–400 (KPVG…TLSL), 401–444 (LQVF…TRMI), 445–488 (QDTK…ETGL), 489–532 (QVYQ…FGSG), 533–631 (QEMK…LIVE), 632–740 (RNFS…PQSS), 741–803 (KGSK…EGRL), 804–857 (LKDM…EKKF), and 858–895 (KQLL…RLWH). Over residues 726–745 (CSSSQCESSKGPQSSKGSKQ) the composition is skewed to low complexity. Positions 726–757 (CSSSQCESSKGPQSSKGSKQSIHDSEVKGEQT) are disordered. A compositionally biased stretch (basic and acidic residues) spans 746-756 (SIHDSEVKGEQ). Positions 1036-1060 (DSSDGITGKKKGGHVQREKAPRRRS) are disordered. A compositionally biased stretch (basic residues) spans 1043-1060 (GKKKGGHVQREKAPRRRS).

This is WD repeat-containing protein 64 (WDR64) from Homo sapiens (Human).